Reading from the N-terminus, the 384-residue chain is Cyclin-J (384 aa).

One can recognise a Cyclin N-terminal domain in the interval Asp-15 to Cys-143.

This sequence belongs to the cyclin family. Cyclin J subfamily.

This chain is Cyclin-J (ccnj), found in Xenopus laevis (African clawed frog).